The primary structure comprises 351 residues: Phosphoribosylformylglycinamidine cyclo-ligase (351 aa).

It belongs to the AIR synthase family.

It localises to the cytoplasm. It catalyses the reaction 2-formamido-N(1)-(5-O-phospho-beta-D-ribosyl)acetamidine + ATP = 5-amino-1-(5-phospho-beta-D-ribosyl)imidazole + ADP + phosphate + H(+). Its pathway is purine metabolism; IMP biosynthesis via de novo pathway; 5-amino-1-(5-phospho-D-ribosyl)imidazole from N(2)-formyl-N(1)-(5-phospho-D-ribosyl)glycinamide: step 2/2. This chain is Phosphoribosylformylglycinamidine cyclo-ligase, found in Xylella fastidiosa (strain 9a5c).